A 1302-amino-acid chain; its full sequence is MELYFGEYQHVQQEYGVHLRLASDDTQKSRSSQNSKAGSYGVSIRVQGIDGHPYIVLNNTERCLAGTSFSENGPPFPPPVINNLPLHSSNGSVPKENSEELQLPENPYAQPSPIRNLKQPLLHEGKNGVLDRKDGSVKPSHLLNFQRHPELLQPYDPEKNELNLQNHQPSESNWLKTLTEEGINNKKPWTCFPKPSNSQPTSPSLEDPAKSGVTAIRLCSSVVIEDPKKQTSVCVNVQSCTKERVGEEALFTSGRPLTAHSPHAHPETKKTRPDVLPFRRQDSAGPVLDGARSRRSSSSSTTPTSANSLYRFLLDDQECAIHADNVNRHENRRYIPFLPGTGRDIDTGSIPGVDQLIEKFDQKPGLQRRGRSGKRNRINTDDRKRSRSVDSAFPFGLQGNSEYLIEFSRNLGKSSEHLLRPSQVCPQRPLSQERRGKQSVGRTFAKLQGAAHGASCAHSRPPQPNIDGKVLETEGSQESTVIRAPSLGAQSKKEEEVKTATATLMLQNRATATSPDSGAKKISVKTFPSASNTQATPDLLKGQQELTQQTNEETAKQILYNYLKEGSTDNDDATKRKVNLVFEKIQTLKSRAAGSAQGNNQACNSTSEVKDLLEQKSKLTIEVAELQRQLQLEVKNQQNIKEERERMRANLEELRSQHNEKVEENSTLQQRLEESEGELRKNLEELFQVKMEREQHQTEIRDLQDQLSEMHDELDSAKRSEDREKGALIEELLQAKQDLQDLLIAKEEQEDLLRKRERELTALKGALKEEVSSHDQEMDKLKEQYDAELQALRESVEEATKNVEVLASRSNTSEQDQAGTEMRVKLLQEENEKLQGRSEELERRVAQLQRQIEDLKGDEAKAKETLKKYEGEIRQLEEALVHARKEEKEAVSARRALENELEAAQGNLSQTTQEQKQLSEKLKEESEQKEQLRRLKNEMENERWHLGKTIEKLQKEMADIVEASRTSTLELQNQLDEYKEKNRRELAEMQRQLKEKTLEAEKSRLTAMKMQDEMRLMEEELRDYQRAQDEALTKRQLLEQTLKDLEYELEAKSHLKDDRSRLVKQMEDKVSQLEMELEEERNNSDLLSERISRSREQMEQLRNELLQERAARQDLECDKISLERQNKDLKSRIIHLEGSYRSSKEGLVVQMEARIAELEDRLESEERDRANLQLSNRRLERKVKELVMQVDDEHLSLTDQKDQLSLRLKAMKRQVEEAEEEIDRLESSKKKLQRELEEQMDMNEHLQGQLNSMKKDLRLKKLPSKVLDDMDDDDDLSTDGGSLYEAPVSYTFSKDSTVASQI.

Positions 1–554 (MELYFGEYQH…ELTQQTNEET (554 aa)) are head. The ZIM signature appears at 37–51 (AGSYGVSIRVQGIDG). The interval 75–104 (PFPPPVINNLPLHSSNGSVPKENSEELQLP) is disordered. Phosphoserine occurs at positions 112 and 202. Disordered stretches follow at residues 186–209 (KKPWTCFPKPSNSQPTSPSLEDPA), 251–305 (FTSG…TPTS), and 364–392 (PGLQRRGRSGKRNRINTDDRKRSRSVDSA). Polar residues predominate over residues 195-204 (PSNSQPTSPS). A compositionally biased stretch (basic and acidic residues) spans 264 to 282 (AHPETKKTRPDVLPFRRQD). Phosphoserine is present on residues Ser283, Ser297, and Ser298. Residues 296–305 (SSSSSTTPTS) are compositionally biased toward low complexity. Positions 366 to 377 (LQRRGRSGKRNR) are enriched in basic residues. The segment covering 378–388 (INTDDRKRSRS) has biased composition (basic and acidic residues). Ser388, Ser391, and Ser486 each carry phosphoserine. Residues 604 to 1258 (NSTSEVKDLL…QLNSMKKDLR (655 aa)) are a coiled coil. The span at 655-664 (RSQHNEKVEE) shows a compositional bias: basic and acidic residues. Positions 655–675 (RSQHNEKVEENSTLQQRLEES) are disordered. Ser708 carries the phosphoserine modification. Disordered stretches follow at residues 903 to 929 (AAQGNLSQTTQEQKQLSEKLKEESEQK) and 1263 to 1287 (PSKVLDDMDDDDDLSTDGGSLYEAP). Residues 917-929 (QLSEKLKEESEQK) are compositionally biased toward basic and acidic residues. A tail region spans residues 1263–1302 (PSKVLDDMDDDDDLSTDGGSLYEAPVSYTFSKDSTVASQI).

The protein belongs to the cingulin family. In terms of assembly, homodimer or oligomer. Interacts with CD2AP and SH3BP1; probably part of a complex at cell junctions. As to expression, smooth muscle, spleen, testis, fetal brain, amygdala, corpus callosum, cerebellum, thalamus and subthalamic nucleus of adult brain.

The protein localises to the cell junction. The protein resides in the tight junction. In terms of biological role, may be involved in anchoring the apical junctional complex, especially tight junctions, to actin-based cytoskeletons. In Homo sapiens (Human), this protein is Cingulin-like protein 1 (CGNL1).